Here is a 246-residue protein sequence, read N- to C-terminus: 23S rRNA (guanosine-2'-O-)-methyltransferase RlmB (246 aa).

Residues Gly-197, Ile-217, and Leu-226 each coordinate S-adenosyl-L-methionine.

It belongs to the class IV-like SAM-binding methyltransferase superfamily. RNA methyltransferase TrmH family. RlmB subfamily.

The protein resides in the cytoplasm. It carries out the reaction guanosine(2251) in 23S rRNA + S-adenosyl-L-methionine = 2'-O-methylguanosine(2251) in 23S rRNA + S-adenosyl-L-homocysteine + H(+). Functionally, specifically methylates the ribose of guanosine 2251 in 23S rRNA. The sequence is that of 23S rRNA (guanosine-2'-O-)-methyltransferase RlmB from Haemophilus ducreyi (strain 35000HP / ATCC 700724).